Reading from the N-terminus, the 171-residue chain is Endoribonuclease YbeY (171 aa).

Zn(2+) contacts are provided by His130, His134, and His140.

The protein belongs to the endoribonuclease YbeY family. Requires Zn(2+) as cofactor.

The protein resides in the cytoplasm. Its function is as follows. Single strand-specific metallo-endoribonuclease involved in late-stage 70S ribosome quality control and in maturation of the 3' terminus of the 16S rRNA. This chain is Endoribonuclease YbeY, found in Neisseria gonorrhoeae (strain ATCC 700825 / FA 1090).